Reading from the N-terminus, the 379-residue chain is MTAIRYEFIKTCKQTGARLGRVHTPHGSFDTPTFMPVGTLATVKTMSPEELKAMDSGIILSNTYHLWLRPGHEIIREAGGLHKFMNWDRAILTDSGGFQVFSLSDFRRIEEEGVHFRNHLNGDKLFLSPEKAMEIQNALGSDIMMAFDECPPFPATFEYMKKSVERTSRWAERCLKAHERPQDQGLFGIVQGGEFEELRRQSAKDLVSMDFPGYAVGGLSVGEPKDIMNRVLEFTTPLLPDNKPRYLMGVGSPDSLIDGAIRGIDMFDCVLPTRIARNGTCMTSEGRLVVKNAKFARDFGPLDPNCDCYTCKNYSRAYIRHLMKCDETFGIRLTSYHNLHFLLNLMEQVRQAIREDRLGDFREEFFEQYGFNKPNAKNF.

D94 functions as the Proton acceptor in the catalytic mechanism. Substrate is bound by residues 94–98 (DSGGF), D148, Q191, and G218. Positions 249-255 (GVGSPDS) are RNA binding. D268 functions as the Nucleophile in the catalytic mechanism. Residues 273 to 277 (TRIAR) form an RNA binding; important for wobble base 34 recognition region. The Zn(2+) site is built by C306, C308, C311, and H337.

The protein belongs to the queuine tRNA-ribosyltransferase family. Homodimer. Within each dimer, one monomer is responsible for RNA recognition and catalysis, while the other monomer binds to the replacement base PreQ1. Requires Zn(2+) as cofactor.

The enzyme catalyses 7-aminomethyl-7-carbaguanine + guanosine(34) in tRNA = 7-aminomethyl-7-carbaguanosine(34) in tRNA + guanine. The protein operates within tRNA modification; tRNA-queuosine biosynthesis. Catalyzes the base-exchange of a guanine (G) residue with the queuine precursor 7-aminomethyl-7-deazaguanine (PreQ1) at position 34 (anticodon wobble position) in tRNAs with GU(N) anticodons (tRNA-Asp, -Asn, -His and -Tyr). Catalysis occurs through a double-displacement mechanism. The nucleophile active site attacks the C1' of nucleotide 34 to detach the guanine base from the RNA, forming a covalent enzyme-RNA intermediate. The proton acceptor active site deprotonates the incoming PreQ1, allowing a nucleophilic attack on the C1' of the ribose to form the product. After dissociation, two additional enzymatic reactions on the tRNA convert PreQ1 to queuine (Q), resulting in the hypermodified nucleoside queuosine (7-(((4,5-cis-dihydroxy-2-cyclopenten-1-yl)amino)methyl)-7-deazaguanosine). The protein is Queuine tRNA-ribosyltransferase of Bacillus anthracis (strain CDC 684 / NRRL 3495).